The chain runs to 241 residues: Homeobox protein TGIF2LX (241 aa).

Disordered stretches follow at residues 1–58 (MEAA…GNLP) and 126–210 (TGKD…SPEE). Positions 21 to 39 (AKTQSPAQDTSIMSRNNAD) are enriched in polar residues. Positions 48–111 (EHKKKRKGNL…INARRRILPD (64 aa)) form a DNA-binding region, homeobox; TALE-type. Residues 195-206 (VSVTSPSSPELV) show a composition bias toward low complexity.

It belongs to the TALE/TGIF homeobox family. Specifically expressed in adult testis.

It localises to the nucleus. Functionally, may have a transcription role in testis. The chain is Homeobox protein TGIF2LX (TGIF2LX) from Homo sapiens (Human).